A 503-amino-acid polypeptide reads, in one-letter code: tRNA-guanine(15) transglycosylase (503 aa).

D86 serves as the catalytic Nucleophile. A substrate-binding site is contributed by D121. Zn(2+) contacts are provided by C278, C280, and C283.

This sequence belongs to the archaeosine tRNA-ribosyltransferase family. The cofactor is Zn(2+).

It carries out the reaction guanosine(15) in tRNA + 7-cyano-7-deazaguanine = 7-cyano-7-carbaguanosine(15) in tRNA + guanine. Its pathway is tRNA modification; archaeosine-tRNA biosynthesis. Exchanges the guanine residue with 7-cyano-7-deazaguanine (preQ0) at position 15 in the dihydrouridine loop (D-loop) of archaeal tRNAs. In Saccharolobus solfataricus (strain ATCC 35092 / DSM 1617 / JCM 11322 / P2) (Sulfolobus solfataricus), this protein is tRNA-guanine(15) transglycosylase.